Reading from the N-terminus, the 427-residue chain is Glutamate-1-semialdehyde 2,1-aminomutase (427 aa).

Residue Lys265 is modified to N6-(pyridoxal phosphate)lysine.

It belongs to the class-III pyridoxal-phosphate-dependent aminotransferase family. HemL subfamily. In terms of assembly, homodimer. Requires pyridoxal 5'-phosphate as cofactor.

It is found in the cytoplasm. The catalysed reaction is (S)-4-amino-5-oxopentanoate = 5-aminolevulinate. Its pathway is porphyrin-containing compound metabolism; protoporphyrin-IX biosynthesis; 5-aminolevulinate from L-glutamyl-tRNA(Glu): step 2/2. In Pseudomonas aeruginosa (strain LESB58), this protein is Glutamate-1-semialdehyde 2,1-aminomutase.